The primary structure comprises 426 residues: Protein arginine N-methyltransferase 2 (426 aa).

2 disordered regions span residues 65–88 (DEEE…GQES) and 155–175 (DEEM…AVAA). A compositionally biased stretch (polar residues) spans 73–88 (NGVQTNGDRQTHGQES). Positions 155 to 168 (DEEMEEDGEQEQEQ) are enriched in acidic residues. An RMT2 domain is found at 207–426 (PSVTSSRYLN…YRLPLCKYMD (220 aa)). S-adenosyl-L-methionine contacts are provided by residues Y214, M243, 263–268 (HGMGIV), 284–286 (EAH), 311–312 (WQ), and D331.

It belongs to the class I-like SAM-binding methyltransferase superfamily. RMT2 methyltransferase family. As to quaternary structure, monomer.

It localises to the cytoplasm. The protein resides in the nucleus. Its function is as follows. S-adenosyl-L-methionine-dependent protein-arginine N-methyltransferase that methylates the delta-nitrogen atom of arginine residues to form N5-methylarginine (type IV) in target proteins. Monomethylates ribosomal protein L12. This Emericella nidulans (strain FGSC A4 / ATCC 38163 / CBS 112.46 / NRRL 194 / M139) (Aspergillus nidulans) protein is Protein arginine N-methyltransferase 2.